We begin with the raw amino-acid sequence, 191 residues long: Abscisic acid receptor PYR1 (191 aa).

Positions 23 to 176 (YQLDPGSCSS…NLQKLATVAE (154 aa)) are START-like. Lys59 serves as a coordination point for abscisate. Thr78 bears the Phosphothreonine; by CARK1 mark. Residues 85-89 (SGLPA) carry the Gate loop motif. Abscisate contacts are provided by residues 89-94 (ANTSTE), 116-122 (RLTNYKS), and Glu141. The Latch loop signature appears at 115–117 (HRL).

It belongs to the PYR/PYL/RCAR abscisic acid intracellular receptor family. Homodimer. Binds ABA on one subunit only. Interacts with HAB1, AHG3, ABI1 and ABI2 when complexed to ABA, and possibly with other PP2Cs. Binds to CARs protein in an ABA-independent manner, both at the plasma membrane and in the nucleus. Interacts directly with CAR1 and CAR4. Interacts with CARK1 in the cytosol. Interacts with AIP1 in an abscisic acid-dependent manner. Interacts with FREE1 (via N-terminus). Interacts with the E3 ubiquitin-protein ligase RSL1 at the plasma membrane. Ubiquitynated and degraded by the proteasome upon binding to the E3 ubiquitin-protein ligase RSL1 at the plasma membrane. In terms of processing, phosphorylated by CARK1 especially in response to abscisic acid (ABA); this phosphorylation promotes its stability and inhibitory ability to ABI1.

It is found in the cytoplasm. The protein localises to the cytosol. It localises to the nucleus. Its subcellular location is the cell membrane. The protein resides in the vacuole. In terms of biological role, receptor for abscisic acid (ABA) required for ABA-mediated responses such as stomatal closure and germination inhibition. Inhibits the activity of group-A protein phosphatases type 2C (PP2Cs) when activated by ABA. Can be activated by both (-)-ABA and (+)-ABA. Promotes drought tolerance. In Arabidopsis thaliana (Mouse-ear cress), this protein is Abscisic acid receptor PYR1.